The sequence spans 218 residues: Probable GTP-binding protein EngB (218 aa).

An EngB-type G domain is found at 44 to 218; that stretch reads DRIEVCFAGR…LRATIATIET (175 aa). GTP-binding positions include 52 to 59, 79 to 83, 97 to 100, 164 to 167, and 198 to 200; these read GRSNVGKS, GRTQE, DLPG, TKSD, and TSS. Mg(2+)-binding residues include S59 and T81.

This sequence belongs to the TRAFAC class TrmE-Era-EngA-EngB-Septin-like GTPase superfamily. EngB GTPase family. The cofactor is Mg(2+).

Necessary for normal cell division and for the maintenance of normal septation. In Jannaschia sp. (strain CCS1), this protein is Probable GTP-binding protein EngB.